A 91-amino-acid chain; its full sequence is MSRSIKKGPFVDAHLIKKVDAAVAGKDKKPIKTWSRRSTVLPEFIGLTIAVHNGRQHVPVYINENMVGHKLGEFALTRTFKGHAADKKSKR.

It belongs to the universal ribosomal protein uS19 family.

Functionally, protein S19 forms a complex with S13 that binds strongly to the 16S ribosomal RNA. The protein is Small ribosomal subunit protein uS19 of Bordetella bronchiseptica (strain ATCC BAA-588 / NCTC 13252 / RB50) (Alcaligenes bronchisepticus).